The following is a 154-amino-acid chain: 6,7-dimethyl-8-ribityllumazine synthase (154 aa).

5-amino-6-(D-ribitylamino)uracil is bound by residues phenylalanine 22, 56–58 (AFE), and 80–82 (AVI). 85-86 (AT) serves as a coordination point for (2S)-2-hydroxy-3-oxobutyl phosphate. The Proton donor role is filled by histidine 88. Phenylalanine 113 contacts 5-amino-6-(D-ribitylamino)uracil. Arginine 127 is a binding site for (2S)-2-hydroxy-3-oxobutyl phosphate.

It belongs to the DMRL synthase family.

The catalysed reaction is (2S)-2-hydroxy-3-oxobutyl phosphate + 5-amino-6-(D-ribitylamino)uracil = 6,7-dimethyl-8-(1-D-ribityl)lumazine + phosphate + 2 H2O + H(+). The protein operates within cofactor biosynthesis; riboflavin biosynthesis; riboflavin from 2-hydroxy-3-oxobutyl phosphate and 5-amino-6-(D-ribitylamino)uracil: step 1/2. Its function is as follows. Catalyzes the formation of 6,7-dimethyl-8-ribityllumazine by condensation of 5-amino-6-(D-ribitylamino)uracil with 3,4-dihydroxy-2-butanone 4-phosphate. This is the penultimate step in the biosynthesis of riboflavin. The polypeptide is 6,7-dimethyl-8-ribityllumazine synthase (Agathobacter rectalis (strain ATCC 33656 / DSM 3377 / JCM 17463 / KCTC 5835 / VPI 0990) (Eubacterium rectale)).